The chain runs to 613 residues: Dihydroxy-acid dehydratase (613 aa).

Aspartate 81 lines the Mg(2+) pocket. A [2Fe-2S] cluster-binding site is contributed by cysteine 122. Residues aspartate 123 and lysine 124 each contribute to the Mg(2+) site. Lysine 124 bears the N6-carboxylysine mark. Residue cysteine 195 coordinates [2Fe-2S] cluster. Residue glutamate 491 coordinates Mg(2+). The active-site Proton acceptor is serine 517.

It belongs to the IlvD/Edd family. In terms of assembly, homodimer. [2Fe-2S] cluster is required as a cofactor. Requires Mg(2+) as cofactor.

The enzyme catalyses (2R)-2,3-dihydroxy-3-methylbutanoate = 3-methyl-2-oxobutanoate + H2O. It catalyses the reaction (2R,3R)-2,3-dihydroxy-3-methylpentanoate = (S)-3-methyl-2-oxopentanoate + H2O. The protein operates within amino-acid biosynthesis; L-isoleucine biosynthesis; L-isoleucine from 2-oxobutanoate: step 3/4. Its pathway is amino-acid biosynthesis; L-valine biosynthesis; L-valine from pyruvate: step 3/4. In terms of biological role, functions in the biosynthesis of branched-chain amino acids. Catalyzes the dehydration of (2R,3R)-2,3-dihydroxy-3-methylpentanoate (2,3-dihydroxy-3-methylvalerate) into 2-oxo-3-methylpentanoate (2-oxo-3-methylvalerate) and of (2R)-2,3-dihydroxy-3-methylbutanoate (2,3-dihydroxyisovalerate) into 2-oxo-3-methylbutanoate (2-oxoisovalerate), the penultimate precursor to L-isoleucine and L-valine, respectively. In Vibrio atlanticus (strain LGP32) (Vibrio splendidus (strain Mel32)), this protein is Dihydroxy-acid dehydratase.